Consider the following 407-residue polypeptide: Serine hydroxymethyltransferase (407 aa).

Residues L120 and 124–126 (GHL) each bind (6S)-5,6,7,8-tetrahydrofolate. N6-(pyridoxal phosphate)lysine is present on K229.

It belongs to the SHMT family. As to quaternary structure, homodimer. Requires pyridoxal 5'-phosphate as cofactor.

It is found in the cytoplasm. The enzyme catalyses (6R)-5,10-methylene-5,6,7,8-tetrahydrofolate + glycine + H2O = (6S)-5,6,7,8-tetrahydrofolate + L-serine. Its pathway is one-carbon metabolism; tetrahydrofolate interconversion. It functions in the pathway amino-acid biosynthesis; glycine biosynthesis; glycine from L-serine: step 1/1. Catalyzes the reversible interconversion of serine and glycine with tetrahydrofolate (THF) serving as the one-carbon carrier. This reaction serves as the major source of one-carbon groups required for the biosynthesis of purines, thymidylate, methionine, and other important biomolecules. Also exhibits THF-independent aldolase activity toward beta-hydroxyamino acids, producing glycine and aldehydes, via a retro-aldol mechanism. The chain is Serine hydroxymethyltransferase from Deinococcus deserti (strain DSM 17065 / CIP 109153 / LMG 22923 / VCD115).